Reading from the N-terminus, the 235-residue chain is Aspartate/glutamate leucyltransferase (235 aa).

Belongs to the R-transferase family. Bpt subfamily.

Its subcellular location is the cytoplasm. The catalysed reaction is N-terminal L-glutamyl-[protein] + L-leucyl-tRNA(Leu) = N-terminal L-leucyl-L-glutamyl-[protein] + tRNA(Leu) + H(+). It carries out the reaction N-terminal L-aspartyl-[protein] + L-leucyl-tRNA(Leu) = N-terminal L-leucyl-L-aspartyl-[protein] + tRNA(Leu) + H(+). In terms of biological role, functions in the N-end rule pathway of protein degradation where it conjugates Leu from its aminoacyl-tRNA to the N-termini of proteins containing an N-terminal aspartate or glutamate. This is Aspartate/glutamate leucyltransferase from Pseudomonas syringae pv. tomato (strain ATCC BAA-871 / DC3000).